The sequence spans 562 residues: Protein wntless (562 aa).

At 1–13 (MSGTILENLSGRK) the chain is on the cytoplasmic side. The helical transmembrane segment at 14–34 (LSILVGSLLLCQVLCFLLGGL) threads the bilayer. Residues 35–239 (YAPVPAGHTN…AIHQNGGFTH (205 aa)) are Lumenal-facing. An N-linked (GlcNAc...) asparagine glycan is attached at Asn58. The chain crosses the membrane as a helical span at residues 240–260 (VWLMLKTLLFPFVVGIMVWFW). Residues 261 to 270 (RRVHLLQRSP) lie on the Cytoplasmic side of the membrane. Residues 271–291 (ALLEYMLLYLGGALTFLNLPL) traverse the membrane as a helical segment. At 292–311 (EYLSLTIEMPYMLLLSDIRQ) the chain is on the lumenal side. A helical transmembrane segment spans residues 312–332 (GIFYAMLLSFWLVFAGEHMLI). Residues 333–344 (QDSHNKSTIRSR) lie on the Cytoplasmic side of the membrane. The chain crosses the membrane as a helical span at residues 345–365 (YWKHLSAVVVGCISLFVFDIS). Residues 366–386 (ERGVQLRNPFYSIWTTPLGAK) lie on the Lumenal side of the membrane. The helical transmembrane segment at 387-407 (VAMSFILLAGVSAAVYFLFLC) threads the bilayer. Residues 408-441 (YMISKVFKNIGDKRTSLPSMSQARRLHYEGLIYR) lie on the Cytoplasmic side of the membrane. The chain crosses the membrane as a helical span at residues 442 to 462 (FKFLMLATLLCAALTVTGFIM). Residues 463–482 (GQMAEGQWKWNDDVEIQLTS) are Lumenal-facing. A helical membrane pass occupies residues 483 to 503 (AFLTGVYGMWNIYIFALLILY). Over 504-562 (APSHKQWPTMHHSDETTQSNENIVASAASEEIEFSNLPSDSNPSEISSLTSFTRKVAFE) the chain is Cytoplasmic. The interval 538 to 562 (SNLPSDSNPSEISSLTSFTRKVAFE) is disordered. Polar residues predominate over residues 539-556 (NLPSDSNPSEISSLTSFT).

It belongs to the wntless family. Interacts with wg; in the Golgi. Interacts with Vps35, a component of the retromer complex; wls stability is regulated by Vps35.

The protein resides in the presynaptic cell membrane. It is found in the postsynaptic cell membrane. Its subcellular location is the cell membrane. It localises to the endoplasmic reticulum membrane. The protein localises to the endosome membrane. The protein resides in the golgi apparatus membrane. A segment polarity gene required for wingless (wg)-dependent patterning processes, acting in both wg-sending cells and wg-target cells. In non-neuronal cells wls directs wg secretion. The wls traffic loop encompasses the Golgi, the cell surface, an endocytic compartment and a retrograde route leading back to the Golgi, and involves clathrin-mediated endocytosis and the retromer complex (a conserved protein complex consisting of Vps35 and Vps26). In neuronal cells (the larval motorneuron NMJ), the wg signal moves across the synapse via the release of wls-containing exosome-like vesicles. Postsynaptic wls is required for the trafficking of fz2 through the fz2-interacting protein Grip. This Drosophila persimilis (Fruit fly) protein is Protein wntless.